Consider the following 483-residue polypeptide: Glutamyl-tRNA(Gln) amidotransferase subunit A (483 aa).

Catalysis depends on charge relay system residues Lys-75 and Ser-150. The active-site Acyl-ester intermediate is Ser-174.

The protein belongs to the amidase family. GatA subfamily. In terms of assembly, heterotrimer of A, B and C subunits.

The enzyme catalyses L-glutamyl-tRNA(Gln) + L-glutamine + ATP + H2O = L-glutaminyl-tRNA(Gln) + L-glutamate + ADP + phosphate + H(+). Its function is as follows. Allows the formation of correctly charged Gln-tRNA(Gln) through the transamidation of misacylated Glu-tRNA(Gln) in organisms which lack glutaminyl-tRNA synthetase. The reaction takes place in the presence of glutamine and ATP through an activated gamma-phospho-Glu-tRNA(Gln). The chain is Glutamyl-tRNA(Gln) amidotransferase subunit A from Legionella pneumophila (strain Corby).